We begin with the raw amino-acid sequence, 120 residues long: Seripauperin-13 (120 aa).

An N-terminal signal peptide occupies residues 1-25; it reads MVKLTSIAAGVAAIAATASATTTLA.

Belongs to the SRP1/TIP1 family. Seripauperin subfamily.

This is Seripauperin-13 (PAU13) from Saccharomyces cerevisiae (strain ATCC 204508 / S288c) (Baker's yeast).